Reading from the N-terminus, the 268-residue chain is 3-methyl-2-oxobutanoate hydroxymethyltransferase (268 aa).

Mg(2+) is bound by residues Asp-44 and Asp-83. 3-methyl-2-oxobutanoate contacts are provided by residues 44–45, Asp-83, and Lys-113; that span reads DS. Glu-115 is a binding site for Mg(2+). Glu-182 functions as the Proton acceptor in the catalytic mechanism.

This sequence belongs to the PanB family. As to quaternary structure, homodecamer; pentamer of dimers. The cofactor is Mg(2+).

It localises to the cytoplasm. The catalysed reaction is 3-methyl-2-oxobutanoate + (6R)-5,10-methylene-5,6,7,8-tetrahydrofolate + H2O = 2-dehydropantoate + (6S)-5,6,7,8-tetrahydrofolate. Its pathway is cofactor biosynthesis; (R)-pantothenate biosynthesis; (R)-pantoate from 3-methyl-2-oxobutanoate: step 1/2. In terms of biological role, catalyzes the reversible reaction in which hydroxymethyl group from 5,10-methylenetetrahydrofolate is transferred onto alpha-ketoisovalerate to form ketopantoate. The sequence is that of 3-methyl-2-oxobutanoate hydroxymethyltransferase from Synechococcus elongatus (strain ATCC 33912 / PCC 7942 / FACHB-805) (Anacystis nidulans R2).